The sequence spans 436 residues: Gamma-glutamyl phosphate reductase (436 aa).

It belongs to the gamma-glutamyl phosphate reductase family.

The protein localises to the cytoplasm. It catalyses the reaction L-glutamate 5-semialdehyde + phosphate + NADP(+) = L-glutamyl 5-phosphate + NADPH + H(+). The protein operates within amino-acid biosynthesis; L-proline biosynthesis; L-glutamate 5-semialdehyde from L-glutamate: step 2/2. Its function is as follows. Catalyzes the NADPH-dependent reduction of L-glutamate 5-phosphate into L-glutamate 5-semialdehyde and phosphate. The product spontaneously undergoes cyclization to form 1-pyrroline-5-carboxylate. The sequence is that of Gamma-glutamyl phosphate reductase from Prochlorococcus marinus (strain MIT 9312).